Reading from the N-terminus, the 568-residue chain is 3-(3-hydroxy-phenyl)propionate/3-hydroxycinnamic acid hydroxylase (568 aa).

FAD is bound by residues 13–42 (DVVI…IVEE) and 278–288 (FRKGRMFLAGD).

Belongs to the PheA/TfdB FAD monooxygenase family. The cofactor is FAD.

The catalysed reaction is 3-(3-hydroxyphenyl)propanoate + NADH + O2 + H(+) = 3-(2,3-dihydroxyphenyl)propanoate + NAD(+) + H2O. It catalyses the reaction (2E)-3-(3-hydroxyphenyl)prop-2-enoate + NADH + O2 + H(+) = (2E)-3-(2,3-dihydroxyphenyl)prop-2-enoate + NAD(+) + H2O. The protein operates within aromatic compound metabolism; 3-phenylpropanoate degradation. Its function is as follows. Catalyzes the insertion of one atom of molecular oxygen into position 2 of the phenyl ring of 3-(3-hydroxyphenyl)propionate (3-HPP) and hydroxycinnamic acid (3HCI). The protein is 3-(3-hydroxy-phenyl)propionate/3-hydroxycinnamic acid hydroxylase of Mycobacterium sp. (strain JLS).